A 233-amino-acid polypeptide reads, in one-letter code: Probable translation initiation factor, mitochondrial (233 aa).

Residues 1–39 (MNSYLQFPHRKLFIQFSYSLTSVFRKCQSRTFMNSQFAS) constitute a mitochondrion transit peptide.

This sequence belongs to the IF-3 family.

The protein localises to the mitochondrion. In terms of biological role, may be involved in mitochondrial translation initiation. In Schizosaccharomyces pombe (strain 972 / ATCC 24843) (Fission yeast), this protein is Probable translation initiation factor, mitochondrial.